Consider the following 191-residue polypeptide: Leucyl/phenylalanyl-tRNA--protein transferase (191 aa).

It belongs to the L/F-transferase family.

It localises to the cytoplasm. It catalyses the reaction N-terminal L-lysyl-[protein] + L-leucyl-tRNA(Leu) = N-terminal L-leucyl-L-lysyl-[protein] + tRNA(Leu) + H(+). The enzyme catalyses N-terminal L-arginyl-[protein] + L-leucyl-tRNA(Leu) = N-terminal L-leucyl-L-arginyl-[protein] + tRNA(Leu) + H(+). The catalysed reaction is L-phenylalanyl-tRNA(Phe) + an N-terminal L-alpha-aminoacyl-[protein] = an N-terminal L-phenylalanyl-L-alpha-aminoacyl-[protein] + tRNA(Phe). In terms of biological role, functions in the N-end rule pathway of protein degradation where it conjugates Leu, Phe and, less efficiently, Met from aminoacyl-tRNAs to the N-termini of proteins containing an N-terminal arginine or lysine. This Herpetosiphon aurantiacus (strain ATCC 23779 / DSM 785 / 114-95) protein is Leucyl/phenylalanyl-tRNA--protein transferase.